The chain runs to 505 residues: MGKFTSFLKRAGSATKKALTSDAAKRMYKMAGKTLQKVVESEVGSAAIDGVMQGTIQSIIQGENLGAQFKQAVILNVAGTLESAPDPLNPGEQHIIINVSEIERAEKEDRVIETHNKKIIERFGGHLLKIRKIMKGEAEAEQLEGKEMMQVEKALKGMLRIGKDQSERITRLYRALQTEEDLRTSDETRMISEYREKFEALKQAIELEQQATHGEAVQEMLDLSAEVIETAAEEVPVFGAGRANVVATTRAIQGGLKLKEIIDKLTGIDLSHLKVADIHPHIIEKAMQSDKIPDNRLAMAIKSKVEVIDEMNTETEHVYDPSCLIVKKEYEKHDNKYHVNIPSALKIHSEHTPKVHIYTTPWDSDKVFICRCIAPHHQQRSFMIGFDLEIEFVFYEDTSVEGHIKHGGAVSIEGRGFRQAYSEFMNAAWSMPSTPELHKEKMQRSLGSHPIYMGSMDYTVSYEQLVSNEMKLVYDTDLQMHCLRGPLKIPKGTLMNALLFAVKVA.

The interval 1–42 (MGKFTSFLKRAGSATKKALTSDAAKRMYKMAGKTLQKVVESE) is involved in membrane permeabilization.

Belongs to the orbivirus VP5 family.

Its subcellular location is the virion. In terms of biological role, VP5 protein is one of the two proteins (with VP2) which constitute the virus particle outer capsid. Acts as a membrane permeabilization protein that mediates release of viral particles from endosomal compartments into the cytoplasm. Permeabilization activity is probably negatively regulated by VP2 and is triggered by endosomal degradation of VP2 and exposure to low pH. This chain is Outer capsid protein VP5 (Segment-6), found in African horse sickness virus 9 (AHSV-9).